The primary structure comprises 711 residues: DNA topoisomerase 3 (711 aa).

Positions lysine 2 to threonine 135 constitute a Toprim domain. Glutamate 8 and aspartate 104 together coordinate Mg(2+). The Topo IA-type catalytic domain maps to tyrosine 152–valine 580. The interval serine 186 to glutamine 191 is interaction with DNA. Residue tyrosine 305 is the O-(5'-phospho-DNA)-tyrosine intermediate of the active site. The interval methionine 691–leucine 711 is disordered.

The protein belongs to the type IA topoisomerase family. The cofactor is Mg(2+).

The enzyme catalyses ATP-independent breakage of single-stranded DNA, followed by passage and rejoining.. Functionally, releases the supercoiling and torsional tension of DNA, which is introduced during the DNA replication and transcription, by transiently cleaving and rejoining one strand of the DNA duplex. Introduces a single-strand break via transesterification at a target site in duplex DNA. The scissile phosphodiester is attacked by the catalytic tyrosine of the enzyme, resulting in the formation of a DNA-(5'-phosphotyrosyl)-enzyme intermediate and the expulsion of a 3'-OH DNA strand. The free DNA strand then undergoes passage around the unbroken strand, thus removing DNA supercoils. Finally, in the religation step, the DNA 3'-OH attacks the covalent intermediate to expel the active-site tyrosine and restore the DNA phosphodiester backbone. This Staphylococcus aureus (strain MRSA252) protein is DNA topoisomerase 3.